The following is a 172-amino-acid chain: Protein GrpE (172 aa).

The segment at 1–23 (MNQDHPEFDSEDLSQNPPETDPL) is disordered.

Belongs to the GrpE family. As to quaternary structure, homodimer.

The protein localises to the cytoplasm. In terms of biological role, participates actively in the response to hyperosmotic and heat shock by preventing the aggregation of stress-denatured proteins, in association with DnaK and GrpE. It is the nucleotide exchange factor for DnaK and may function as a thermosensor. Unfolded proteins bind initially to DnaJ; upon interaction with the DnaJ-bound protein, DnaK hydrolyzes its bound ATP, resulting in the formation of a stable complex. GrpE releases ADP from DnaK; ATP binding to DnaK triggers the release of the substrate protein, thus completing the reaction cycle. Several rounds of ATP-dependent interactions between DnaJ, DnaK and GrpE are required for fully efficient folding. The polypeptide is Protein GrpE (Xanthomonas axonopodis pv. citri (strain 306)).